Consider the following 509-residue polypeptide: UDP-N-acetylmuramyl-tripeptide synthetase (509 aa).

S30 is a UDP-N-acetyl-alpha-D-muramoyl-L-alanyl-D-glutamate binding site. 111-117 (GTDGKTT) contributes to the ATP binding site. Residues 155–156 (ST), T182, and R192 each bind UDP-N-acetyl-alpha-D-muramoyl-L-alanyl-D-glutamate. An N6-carboxylysine modification is found at K224.

The protein belongs to the MurCDEF family. MurE subfamily. In terms of processing, carboxylation is probably crucial for Mg(2+) binding and, consequently, for the gamma-phosphate positioning of ATP.

The protein resides in the cytoplasm. Its pathway is cell wall biogenesis; peptidoglycan biosynthesis. Its function is as follows. Catalyzes the addition of an amino acid to the nucleotide precursor UDP-N-acetylmuramoyl-L-alanyl-D-glutamate (UMAG) in the biosynthesis of bacterial cell-wall peptidoglycan. This Roseiflexus sp. (strain RS-1) protein is UDP-N-acetylmuramyl-tripeptide synthetase.